We begin with the raw amino-acid sequence, 169 residues long: Heat shock protein beta-7 (169 aa).

Residues 1–37 (MSHRTSSAFRAERSFRSSSSSSSSSSSSASRALPAQD) are disordered. The segment at 1–70 (MSHRTSSAFR…PLAFPARPGG (70 aa)) is required for localization to SC35 splicing speckles. Low complexity predominate over residues 16-32 (RSSSSSSSSSSSSASRA). The region spanning 61–169 (PLAFPARPGG…QQTFRTEIKI (109 aa)) is the sHSP domain.

It belongs to the small heat shock protein (HSP20) family. As to quaternary structure, interacts with C-terminal domain of actin-binding protein 280. As to expression, found in both cardiac and slow skeletal (soleus) muscle.

It is found in the cytoplasm. Its subcellular location is the nucleus. The protein resides in the cajal body. This chain is Heat shock protein beta-7 (Hspb7), found in Mus musculus (Mouse).